We begin with the raw amino-acid sequence, 557 residues long: Formate--tetrahydrofolate ligase (557 aa).

ATP is bound at residue 65 to 72 (TPAGEGKT).

This sequence belongs to the formate--tetrahydrofolate ligase family.

The catalysed reaction is (6S)-5,6,7,8-tetrahydrofolate + formate + ATP = (6R)-10-formyltetrahydrofolate + ADP + phosphate. It functions in the pathway one-carbon metabolism; tetrahydrofolate interconversion. The chain is Formate--tetrahydrofolate ligase from Zymomonas mobilis subsp. mobilis (strain ATCC 31821 / ZM4 / CP4).